The sequence spans 350 residues: Decarboxylase iboD (350 aa).

This sequence belongs to the phosphatidylserine decarboxylase family.

It functions in the pathway secondary metabolite biosynthesis. In terms of biological role, decarboxylase; part of the gene cluster that mediates the biosynthesis of the psychoactive metabolites ibotenic acid and muscimol. The first committed step is glutamate hydroxylation by the 2-oxoglutarate-dependent dioxygenase iboH, and the last step is decarboxylation of ibotenic acid to muscimol by the decarboxylase iboD. The order of the intermediate reactions is somewhat ambiguous. IboA likely activates the carboxylic acid at position 5 to introduce an amide bond, and the flavin monooxygenase iboF generates the N-O bond. There are several options for the latter step. One option is that iboF directly hydroxylates the amide nitrogen formed by iboA to produce a hydroxamic acid species. Another option is that iboF hydroxylates an external N-containing compound, whose resulting N-O bond is subsequently introduced into the hydroxyglutamate scaffold. The paralogous PLP-dependent cystathionine gamma-synthase-like enzymes iboG1 and iboG2 are likely involved in substitution of the OH group at position 3 by the O-N moiety. The first cyclic intermediate is most probably tricholomic acid which is likely desaturated to ibotenic acid by the cytochrome P450 monooxygenase iboC. This is Decarboxylase iboD from Amanita muscaria (strain Koide BX008).